The chain runs to 647 residues: DNA mismatch repair protein MutL (647 aa).

Belongs to the DNA mismatch repair MutL/HexB family.

In terms of biological role, this protein is involved in the repair of mismatches in DNA. It is required for dam-dependent methyl-directed DNA mismatch repair. May act as a 'molecular matchmaker', a protein that promotes the formation of a stable complex between two or more DNA-binding proteins in an ATP-dependent manner without itself being part of a final effector complex. The chain is DNA mismatch repair protein MutL from Bacillus cereus (strain Q1).